Consider the following 121-residue polypeptide: Insulin-like peptide 01 (121 aa).

The first 24 residues, Met-1–Ser-24, serve as a signal peptide directing secretion. The propeptide occupies Asn-25–Met-45. Disulfide bonds link Cys-52–Cys-107, Cys-64–Cys-120, and Cys-106–Cys-111. Positions Arg-69–Arg-97 are cleaved as a propeptide — c peptide.

It belongs to the insulin family.

The protein resides in the secreted. In terms of biological role, insulin decreases blood glucose concentration. May have evolved to activate insulin receptors (INSR) in vertebrates. Molecular docking studies reveals unique interaction with the human insulin receptor. In vivo, insulin-like peptide injection reduces blood glucose levels in two models of zebrafish diabetes (streptozotocin- and glucose-induced). Also shorter swimming distance of zebrafish larvae, an effect which is not observed with human insulin. The sequence is that of Insulin-like peptide 01 from Exaiptasia diaphana (Tropical sea anemone).